A 485-amino-acid chain; its full sequence is Glutamyl-tRNA(Gln) amidotransferase subunit A (485 aa).

Residues Lys-82 and Ser-157 each act as charge relay system in the active site. The Acyl-ester intermediate role is filled by Ser-181.

The protein belongs to the amidase family. GatA subfamily. As to quaternary structure, heterotrimer of A, B and C subunits.

The enzyme catalyses L-glutamyl-tRNA(Gln) + L-glutamine + ATP + H2O = L-glutaminyl-tRNA(Gln) + L-glutamate + ADP + phosphate + H(+). Allows the formation of correctly charged Gln-tRNA(Gln) through the transamidation of misacylated Glu-tRNA(Gln) in organisms which lack glutaminyl-tRNA synthetase. The reaction takes place in the presence of glutamine and ATP through an activated gamma-phospho-Glu-tRNA(Gln). This chain is Glutamyl-tRNA(Gln) amidotransferase subunit A, found in Treponema denticola (strain ATCC 35405 / DSM 14222 / CIP 103919 / JCM 8153 / KCTC 15104).